Consider the following 480-residue polypeptide: ATP synthase subunit beta (480 aa).

An ATP-binding site is contributed by 158 to 165; it reads GGAGVGKT.

It belongs to the ATPase alpha/beta chains family. In terms of assembly, F-type ATPases have 2 components, CF(1) - the catalytic core - and CF(0) - the membrane proton channel. CF(1) has five subunits: alpha(3), beta(3), gamma(1), delta(1), epsilon(1). CF(0) has three main subunits: a(1), b(2) and c(9-12). The alpha and beta chains form an alternating ring which encloses part of the gamma chain. CF(1) is attached to CF(0) by a central stalk formed by the gamma and epsilon chains, while a peripheral stalk is formed by the delta and b chains.

The protein resides in the cell inner membrane. It catalyses the reaction ATP + H2O + 4 H(+)(in) = ADP + phosphate + 5 H(+)(out). Functionally, produces ATP from ADP in the presence of a proton gradient across the membrane. The catalytic sites are hosted primarily by the beta subunits. The protein is ATP synthase subunit beta of Acidobacterium capsulatum (strain ATCC 51196 / DSM 11244 / BCRC 80197 / JCM 7670 / NBRC 15755 / NCIMB 13165 / 161).